The sequence spans 257 residues: Acetylglutamate kinase (257 aa).

Substrate-binding positions include 43 to 44, Arg65, and Asn157; that span reads GG. ATP is bound by residues 180–185 and 208–210; these read DVSGIL and IIT.

Belongs to the acetylglutamate kinase family. ArgB subfamily. Homodimer.

It localises to the cytoplasm. The catalysed reaction is N-acetyl-L-glutamate + ATP = N-acetyl-L-glutamyl 5-phosphate + ADP. It functions in the pathway amino-acid biosynthesis; L-arginine biosynthesis; N(2)-acetyl-L-ornithine from L-glutamate: step 2/4. Catalyzes the ATP-dependent phosphorylation of N-acetyl-L-glutamate. This Photorhabdus laumondii subsp. laumondii (strain DSM 15139 / CIP 105565 / TT01) (Photorhabdus luminescens subsp. laumondii) protein is Acetylglutamate kinase.